Consider the following 343-residue polypeptide: Phenylalanine--tRNA ligase alpha subunit (343 aa).

Glu256 contributes to the Mg(2+) binding site.

It belongs to the class-II aminoacyl-tRNA synthetase family. Phe-tRNA synthetase alpha subunit type 1 subfamily. In terms of assembly, tetramer of two alpha and two beta subunits. It depends on Mg(2+) as a cofactor.

It localises to the cytoplasm. It carries out the reaction tRNA(Phe) + L-phenylalanine + ATP = L-phenylalanyl-tRNA(Phe) + AMP + diphosphate + H(+). The protein is Phenylalanine--tRNA ligase alpha subunit of Prosthecochloris aestuarii (strain DSM 271 / SK 413).